The primary structure comprises 141 residues: Large ribosomal subunit protein uL16 (141 aa).

The tract at residues 1–20 is disordered; it reads MLMPKRTKYRKQQKGRNRGK.

Belongs to the universal ribosomal protein uL16 family. Part of the 50S ribosomal subunit.

Its function is as follows. Binds 23S rRNA and is also seen to make contacts with the A and possibly P site tRNAs. The polypeptide is Large ribosomal subunit protein uL16 (Nautilia profundicola (strain ATCC BAA-1463 / DSM 18972 / AmH)).